Here is a 206-residue protein sequence, read N- to C-terminus: Inactive ribonuclease-like protein 9 (206 aa).

The N-terminal stretch at 1–26 (MMRTLITTHSLLLFLLLLQLLQPLQF) is a signal peptide. Disulfide bonds link Cys99-Cys154, Cys117-Cys169, and Cys124-Cys131. An N-linked (GlcNAc...) asparagine glycan is attached at Asn132.

The protein belongs to the pancreatic ribonuclease family.

The protein resides in the secreted. In terms of biological role, does not exhibit any ribonuclease activity. The polypeptide is Inactive ribonuclease-like protein 9 (RNASE9) (Saimiri boliviensis boliviensis (Bolivian squirrel monkey)).